Here is a 406-residue protein sequence, read N- to C-terminus: Cysteine desulfurase (406 aa).

Lys226 carries the N6-(pyridoxal phosphate)lysine modification. The Cysteine persulfide intermediate role is filled by Cys364.

Belongs to the class-V pyridoxal-phosphate-dependent aminotransferase family. Csd subfamily. In terms of assembly, homodimer. Interacts with SufE and the SufBCD complex composed of SufB, SufC and SufD. The interaction with SufE is required to mediate the direct transfer of the sulfur atom from the S-sulfanylcysteine. Requires pyridoxal 5'-phosphate as cofactor.

The protein localises to the cytoplasm. The enzyme catalyses (sulfur carrier)-H + L-cysteine = (sulfur carrier)-SH + L-alanine. The catalysed reaction is L-selenocysteine + AH2 = hydrogenselenide + L-alanine + A + H(+). It functions in the pathway cofactor biosynthesis; iron-sulfur cluster biosynthesis. Its function is as follows. Cysteine desulfurases mobilize the sulfur from L-cysteine to yield L-alanine, an essential step in sulfur metabolism for biosynthesis of a variety of sulfur-containing biomolecules. Component of the suf operon, which is activated and required under specific conditions such as oxidative stress and iron limitation. Acts as a potent selenocysteine lyase in vitro, that mobilizes selenium from L-selenocysteine. Selenocysteine lyase activity is however unsure in vivo. The sequence is that of Cysteine desulfurase from Yersinia pseudotuberculosis serotype O:1b (strain IP 31758).